Here is a 125-residue protein sequence, read N- to C-terminus: MLSIFGCVRAVPRVVQMSARRTLKVPAPSQSIPDVEAFLKTIGRDCSELTETFENKWENLFEWDSKTLKSKGVSVQQRRYILHQAQKFRNGEPVKEMKKGKKSFFGGERNRKATVAKWRAEQRNK.

The transit peptide at 1–10 (MLSIFGCVRA) directs the protein to the mitochondrion. The disordered stretch occupies residues 103–125 (SFFGGERNRKATVAKWRAEQRNK).

It belongs to the mitochondrion-specific ribosomal protein mS41 family.

It is found in the mitochondrion. Its function is as follows. Involved in telomere length regulation. In Candida glabrata (strain ATCC 2001 / BCRC 20586 / JCM 3761 / NBRC 0622 / NRRL Y-65 / CBS 138) (Yeast), this protein is Small ribosomal subunit protein mS41 (FYV4).